A 264-amino-acid polypeptide reads, in one-letter code: Versicolorin reductase stcU (264 aa).

Residues I23, D69, N96, and R129 each contribute to the NADP(+) site. Residues S145 and S146 each act as proton donor in the active site. The NADP(+) site is built by Y160, K164, I193, and T195. Y160 serves as the catalytic Proton acceptor. The active-site Lowers pKa of active site Tyr is K164.

The protein belongs to the short-chain dehydrogenases/reductases (SDR) family.

It catalyses the reaction (4S,8R)-2,13,16,20-tetrahydroxy-7,9-dioxapentacyclo[10.8.0.0(3,10).0(4,8).0(14,19)]icosa-1(12),2,5,10,13,16,19-heptaen-18-one + NADPH + H(+) = (4S,8R,16R)-2,13,16,20-tetrahydroxy-7,9-dioxapentacyclo[10.8.0.0(3,10).0(4,8).0(14,19)]icosa-1(12),2,5,10,13,19-hexaen-18-one + NADP(+). It functions in the pathway mycotoxin biosynthesis; sterigmatocystin biosynthesis. Functionally, versicolorin reductase; part of the gene cluster that mediates the biosynthesis of sterigmatocystin (ST), a polyketide-derived furanocoumarin which is part of the most toxic and carcinogenic compounds among the known mycotoxins. The first step in the biosynthesis of sterigmatocystin is the production of hexanoate by the fatty acid synthase (FAS) units stcJ and stcK. The polyketide backbone is assembled by the non-reducing polyketide synthase stcA by condensation of the starter hexanoyl-CoA and 7 malonyl-CoA extender units followed by cyclization and release of norsolorinic acid. Norsolorinic acid is the first stable intermediate in the biosynthesis of sterigmatocystin and is converted into averantin (AVN) by the ketoreductase stcE which reduces the hexanoate ketone to an alcohol. Averantin is then oxidized into 5'-hydroxyaverantin (HAVN) by the cytochrome P450 monooxygenase stcF. 5'-hydroxyaverantin is further converted to 5'-oxyaverantin (OAVN) by the 5'-hydroxyaverantin dehydrogenase stcG. The next step is the conversion of OAVN into averufin (AVF) which is catalyzed by a yet to be identified enzyme. The cytochrome P450 monooxygenase stcB and the flavin-binding monooxygenase stcW are both required for the conversion of averufin to 1-hydroxyversicolorone. The esterase stcI probably catalyzes the formation of versiconal hemiacetal acetate from 1-hydroxyversicolorone. The oxydoreductase stcN then probably catalyzes the biosynthetic step from versiconal to versicolorin B (VERB). The next step is performed by the versicolorin B desaturase stcL to produce versicolorin A (VERA). The ketoreductase stcU and the cytochrome P450 monooxygenase stcS are involved in the conversion of versicolorin A to demethylsterigmatocystin. The Baeyer-Villiger oxidas stcQ and the reductase stcR might be involved in the biosynthetic step from versicolorin A to demethylsterigmatocystin. The final step in the biosynthesis of sterigmatocystin is the methylation of demethylsterigmatocystin catalyzed by the methyltransferase stcP. This chain is Versicolorin reductase stcU, found in Emericella nidulans (strain FGSC A4 / ATCC 38163 / CBS 112.46 / NRRL 194 / M139) (Aspergillus nidulans).